A 283-amino-acid chain; its full sequence is Elongation factor Ts (283 aa).

The involved in Mg(2+) ion dislocation from EF-Tu stretch occupies residues 80–83; the sequence is TDFV.

This sequence belongs to the EF-Ts family.

The protein resides in the cytoplasm. Functionally, associates with the EF-Tu.GDP complex and induces the exchange of GDP to GTP. It remains bound to the aminoacyl-tRNA.EF-Tu.GTP complex up to the GTP hydrolysis stage on the ribosome. This is Elongation factor Ts from Enterobacter sp. (strain 638).